A 462-amino-acid chain; its full sequence is Peroxisomal membrane protein PEX31 (462 aa).

Over residues 1–19 the composition is skewed to polar residues; it reads MSEINNENLEPTSSTVAES. The tract at residues 1 to 26 is disordered; that stretch reads MSEINNENLEPTSSTVAESTESKNKH. The Cytoplasmic segment spans residues 1–90; the sequence is MSEINNENLE…LSIITWSNDN (90 aa). A helical transmembrane segment spans residues 91-111; that stretch reads VSANLLGIFLFTVCVLYFGFI. Residues 112-175 lie on the Peroxisomal side of the membrane; it reads TRYFGHLMIV…TILSAQDVRR (64 aa). Residues 176–196 form a helical membrane-spanning segment; the sequence is LLFTIAFLSPVYIFLTVFVLS. Residues 197 to 462 are Cytoplasmic-facing; that stretch reads PNYLMLIGGL…ISDVSMSPSL (266 aa). The tract at residues 406-425 is disordered; the sequence is PTVEKATPNSHALKSEENNR. At serine 432 the chain carries Phosphoserine. Threonine 435 is subject to Phosphothreonine.

Belongs to the PEX28-32 family. PEX30/31 subfamily.

The protein resides in the peroxisome membrane. The protein is Peroxisomal membrane protein PEX31 (PEX31) of Saccharomyces cerevisiae (strain ATCC 204508 / S288c) (Baker's yeast).